The following is a 543-amino-acid chain: Telomerase Cajal body protein 1 homolog (543 aa).

Residues 95 to 128 (GRPKNAVESPHAGVPMETSLAAEEEANGDEEEES) are disordered. The span at 116–127 (AEEEANGDEEEE) shows a compositional bias: acidic residues. WD repeat units lie at residues 237–283 (PEGG…LRCS), 291–329 (DEVM…RFCD), and 378–421 (GHKG…QPLV).

It belongs to the TCAB1 family.

It is found in the nucleus. The protein localises to the cajal body. RNA chaperone that plays a key role in Cajal body formation. Specifically recognizes and binds the Cajal body box (CAB box) present in both small Cajal body RNAs (scaRNAs). Probably acts by mediating localization of scaRNAs to Cajal bodies. The sequence is that of Telomerase Cajal body protein 1 homolog from Drosophila melanogaster (Fruit fly).